We begin with the raw amino-acid sequence, 72 residues long: Large ribosomal subunit protein bL28 (72 aa).

Belongs to the bacterial ribosomal protein bL28 family.

The sequence is that of Large ribosomal subunit protein bL28 from Chlorobaculum tepidum (strain ATCC 49652 / DSM 12025 / NBRC 103806 / TLS) (Chlorobium tepidum).